Consider the following 198-residue polypeptide: MSSRGHSTLPRTLMAPRMISEGDIGGIAQITSSLFLGRGSVASNRHLLQARGITCIVNATIEIPNFNWPQFEYVKVPLADMPHAPIGLYFDTVADKIHSVSRKHGATLVHCAAGVSRSATLCIAYLMKFHNVCLLEAYNWVKARRPVIRPNVGFWRQLIDYERQLFGKSTVKMVQTPYGIVPDVYEKESRHLMPYWGI.

One can recognise a Tyrosine-protein phosphatase domain in the interval 26–167 (GIAQITSSLF…LIDYERQLFG (142 aa)). Catalysis depends on Cys-111, which acts as the Phosphocysteine intermediate.

This sequence belongs to the protein-tyrosine phosphatase family. Non-receptor class dual specificity subfamily. As to quaternary structure, interacts with CD28.

It catalyses the reaction O-phospho-L-tyrosyl-[protein] + H2O = L-tyrosyl-[protein] + phosphate. The enzyme catalyses O-phospho-L-seryl-[protein] + H2O = L-seryl-[protein] + phosphate. It carries out the reaction O-phospho-L-threonyl-[protein] + H2O = L-threonyl-[protein] + phosphate. Involved in the inactivation of MAP kinases. Dephosphorylates ERK, JNK and p38 MAP-kinases. Plays a negative role in TCR signaling by dephosphorylating MAP3K7 adapter TAB1 leading to its inactivation. This is Dual specificity protein phosphatase 14 (DUSP14) from Homo sapiens (Human).